We begin with the raw amino-acid sequence, 891 residues long: Metabotropic glutamate receptor-like protein N (891 aa).

Residues Met1 to Tyr399 lie on the Extracellular side of the membrane. N-linked (GlcNAc...) asparagine glycosylation is found at Asn52, Asn85, Asn88, Asn125, Asn132, Asn224, Asn298, Asn312, Asn320, Asn325, Asn353, Asn363, and Asn375. The tract at residues Asn52 to Asn91 is disordered. Residues Gly400–Ile420 traverse the membrane as a helical segment. Residues Lys421 to Pro433 are Cytoplasmic-facing. The helical transmembrane segment at Thr434 to Val454 threads the bilayer. Residues Ser455–Thr461 lie on the Extracellular side of the membrane. A helical membrane pass occupies residues Cys462–Val482. The Cytoplasmic portion of the chain corresponds to Lys483–Gln505. A helical transmembrane segment spans residues Leu506 to Gly526. Over Leu527–Gly555 the chain is Extracellular. A helical transmembrane segment spans residues Leu556 to Val576. Topologically, residues Ser577 to Lys592 are cytoplasmic. The chain crosses the membrane as a helical span at residues Ser593–Ile613. Topologically, residues Ser614 to Ser625 are extracellular. A helical membrane pass occupies residues Gly626–Leu646. Over Lys647–Gln891 the chain is Cytoplasmic. Disordered regions lie at residues Gln660–Ser689, Asn742–Pro827, and Asp869–Gln891. Residues Asn742–Gln767 show a composition bias toward polar residues. Positions Pro772 to Asn782 are enriched in low complexity. The span at Asp783–Arg820 shows a compositional bias: polar residues. Positions Ile872 to Ser881 are enriched in acidic residues. Low complexity predominate over residues Ser882–Gln891.

It belongs to the G-protein coupled receptor 3 family. GABA-B receptor subfamily.

Its subcellular location is the membrane. The polypeptide is Metabotropic glutamate receptor-like protein N (grlN) (Dictyostelium discoideum (Social amoeba)).